Consider the following 277-residue polypeptide: MKRPVDFFAMKENGEKITMITAYDYPSAKNVEQAEADMILVGDSLGMVVLGYDSTVPVTMDDMIHHTKAVKRGAPDTFVVTDMPFMTYHGSVDETIQNARKIIQESGAHAVKLEGAGEVVNKIARLTEAGAPVVAHLGLTPQSVGLTGSYKVRAKSAQEAQELMDNALAVEAAGAIALVLEAIPRQLAEKVSKALSIPTIGIGAGVETDGQVLVYHDIIGYGISRRAKFVKAYADIDERIEPALASYVKEVKAATFPEVKHSFTMAEEDLKGLYGRE.

Mg(2+) is bound by residues aspartate 43 and aspartate 82. Residues 43 to 44 (DS), aspartate 82, and lysine 112 contribute to the 3-methyl-2-oxobutanoate site. Glutamate 114 contributes to the Mg(2+) binding site. The active-site Proton acceptor is glutamate 181.

It belongs to the PanB family. Homodecamer; pentamer of dimers. Mg(2+) is required as a cofactor.

It is found in the cytoplasm. It carries out the reaction 3-methyl-2-oxobutanoate + (6R)-5,10-methylene-5,6,7,8-tetrahydrofolate + H2O = 2-dehydropantoate + (6S)-5,6,7,8-tetrahydrofolate. It participates in cofactor biosynthesis; (R)-pantothenate biosynthesis; (R)-pantoate from 3-methyl-2-oxobutanoate: step 1/2. In terms of biological role, catalyzes the reversible reaction in which hydroxymethyl group from 5,10-methylenetetrahydrofolate is transferred onto alpha-ketoisovalerate to form ketopantoate. In Listeria monocytogenes serotype 4b (strain CLIP80459), this protein is 3-methyl-2-oxobutanoate hydroxymethyltransferase.